Here is a 215-residue protein sequence, read N- to C-terminus: 3-isopropylmalate dehydratase small subunit (215 aa).

Belongs to the LeuD family. LeuD type 1 subfamily. Heterodimer of LeuC and LeuD.

It catalyses the reaction (2R,3S)-3-isopropylmalate = (2S)-2-isopropylmalate. The protein operates within amino-acid biosynthesis; L-leucine biosynthesis; L-leucine from 3-methyl-2-oxobutanoate: step 2/4. Its function is as follows. Catalyzes the isomerization between 2-isopropylmalate and 3-isopropylmalate, via the formation of 2-isopropylmaleate. The chain is 3-isopropylmalate dehydratase small subunit from Ectopseudomonas mendocina (strain ymp) (Pseudomonas mendocina).